The sequence spans 323 residues: ATP synthase gamma chain (323 aa).

The tract at residues 206–240 is insert; sequence NPIVNLVGFGYKERGVKPINNRRATSDIVGESKSI.

It belongs to the ATPase gamma chain family. In terms of assembly, F-type ATPases have 2 components, CF(1) - the catalytic core - and CF(0) - the membrane proton channel. CF(1) has five subunits: alpha(3), beta(3), gamma(1), delta(1), epsilon(1). CF(0) has three main subunits: a, b and c.

It localises to the cell inner membrane. Produces ATP from ADP in the presence of a proton gradient across the membrane. The gamma chain is believed to be important in regulating ATPase activity and the flow of protons through the CF(0) complex. This chain is ATP synthase gamma chain, found in Rickettsia conorii (strain ATCC VR-613 / Malish 7).